Consider the following 191-residue polypeptide: FMN-dependent NADH:quinone oxidoreductase 1 (191 aa).

Residues serine 10 and 16 to 18 contribute to the FMN site; that span reads SVS.

It belongs to the azoreductase type 1 family. As to quaternary structure, homodimer. Requires FMN as cofactor.

The enzyme catalyses 2 a quinone + NADH + H(+) = 2 a 1,4-benzosemiquinone + NAD(+). It carries out the reaction N,N-dimethyl-1,4-phenylenediamine + anthranilate + 2 NAD(+) = 2-(4-dimethylaminophenyl)diazenylbenzoate + 2 NADH + 2 H(+). Its function is as follows. Quinone reductase that provides resistance to thiol-specific stress caused by electrophilic quinones. Functionally, also exhibits azoreductase activity. Catalyzes the reductive cleavage of the azo bond in aromatic azo compounds to the corresponding amines. The chain is FMN-dependent NADH:quinone oxidoreductase 1 from Jannaschia sp. (strain CCS1).